The chain runs to 1775 residues: ATP-dependent RNA helicase DEAH12, chloroplastic (1775 aa).

Residues methionine 1 to arginine 33 constitute a chloroplast transit peptide. The disordered stretch occupies residues methionine 1 to valine 77. Positions serine 21–serine 34 are enriched in low complexity. The segment covering alanine 35–proline 60 has biased composition (polar residues). One can recognise a Helicase ATP-binding domain in the interval leucine 316 to asparagine 480. Glycine 329–serine 336 is an ATP binding site. The DEAH box signature appears at aspartate 427 to histidine 430. The region spanning aspartate 510–glycine 676 is the Helicase C-terminal domain. The interval isoleucine 1560–isoleucine 1767 is TRIAD supradomain. The Zn(2+) site is built by cysteine 1564, cysteine 1567, cysteine 1580, histidine 1582, cysteine 1585, cysteine 1588, cysteine 1607, cysteine 1612, cysteine 1652, cysteine 1657, cysteine 1675, cysteine 1678, cysteine 1683, cysteine 1686, histidine 1691, cysteine 1696, cysteine 1722, and cysteine 1725. The RING-type 1 zinc-finger motif lies at cysteine 1564–cysteine 1612. Residues aspartate 1631–cysteine 1696 form an IBR-type zinc finger. The RING-type 2; atypical zinc finger occupies cysteine 1722–cysteine 1750. The active site involves cysteine 1735. Zn(2+) is bound by residues cysteine 1740 and cysteine 1742.

This sequence belongs to the DEAD box helicase family. DEAH subfamily.

The protein localises to the plastid. Its subcellular location is the chloroplast. It carries out the reaction ATP + H2O = ADP + phosphate + H(+). This Arabidopsis thaliana (Mouse-ear cress) protein is ATP-dependent RNA helicase DEAH12, chloroplastic.